Reading from the N-terminus, the 487-residue chain is 2-succinylbenzoate--CoA ligase (487 aa).

Belongs to the ATP-dependent AMP-binding enzyme family. MenE subfamily.

It catalyses the reaction 2-succinylbenzoate + ATP + CoA = 2-succinylbenzoyl-CoA + AMP + diphosphate. Its pathway is quinol/quinone metabolism; 1,4-dihydroxy-2-naphthoate biosynthesis; 1,4-dihydroxy-2-naphthoate from chorismate: step 5/7. The protein operates within quinol/quinone metabolism; menaquinone biosynthesis. In terms of biological role, converts 2-succinylbenzoate (OSB) to 2-succinylbenzoyl-CoA (OSB-CoA). This Bacillus velezensis (strain DSM 23117 / BGSC 10A6 / LMG 26770 / FZB42) (Bacillus amyloliquefaciens subsp. plantarum) protein is 2-succinylbenzoate--CoA ligase.